The chain runs to 364 residues: Autophagy-related protein 14 (364 aa).

The segment at 5 to 20 (CPICETQSHVFYCAHC) is cysteine repeats. Residues 38–114 (LGKINNALRN…QDRRIKEKSR (77 aa)) are a coiled coil.

The protein belongs to the ATG14 family. As to quaternary structure, component of the autophagy-specific VPS34 PI3-kinase complex I composed of VPS15, VPS30, VPS34, ATG14 and ATG38. Interacts directly with ATG38.

Its subcellular location is the preautophagosomal structure membrane. It localises to the vacuole membrane. In terms of biological role, required for cytoplasm to vacuole transport (Cvt) and autophagy as a part of the autophagy-specific VPS34 PI3-kinase complex I. This complex is essential to recruit the ATG8-phosphatidylinositol conjugate and the ATG12-ATG5 conjugate to the pre-autophagosomal structure. ATG14 mediates the specific binding of the VPS34 PI3-kinase complex I to the preautophagosomal structure (PAS). Required for survival and/or proliferation in kidneys and in brain. This chain is Autophagy-related protein 14, found in Candida glabrata (strain ATCC 2001 / BCRC 20586 / JCM 3761 / NBRC 0622 / NRRL Y-65 / CBS 138) (Yeast).